The chain runs to 414 residues: Ceramide synthase 5 (414 aa).

Topologically, residues 1-43 are lumenal; that stretch reads MATAAAETLGLLWGWLWSESFWLPQNVSWADLEGPGDGYGYPR. The N-linked (GlcNAc...) asparagine glycan is linked to Asn-26. A helical membrane pass occupies residues 44-64; the sequence is AQHVLSVFPLAVCIFSVRMLF. Residues 75–136 form a homeobox-like region; it reads RVGIKDSPVN…RHRRNQDKPP (62 aa). The TLC domain maps to 139-340; it reads TKFCESMWRF…IVQTASKALS (202 aa). Transmembrane regions (helical) follow at residues 148 to 168, 187 to 207, 214 to 234, and 272 to 292; these read FTYY…MPWF, LYYY…SQFI, FLMM…SYVN, and LFVI…PLWI. Residues 299-309 carry the Last loop motif motif; the sequence is ESWEIIGPYPS. The helical transmembrane segment at 312-332 threads the bilayer; that stretch reads LFNALLLILQVLHAIWSYLIV. Residues 333–414 are Cytoplasmic-facing; the sequence is QTASKALSRG…RASPHLHSCD (82 aa). Residues 347–373 form a disordered region; the sequence is DDRSDVESSSEEEDETTHKNNLSGSSS.

In terms of assembly, interacts with PAQR4; the interaction regulates the stability and activity of CERS5 and is inhibited in presence of ceramides. In terms of processing, phosphorylated at the C-terminus by CK2. Ubiquitously expressed, with highest levels in testis and kidney. Expressed in pulmonary epithelia.

Its subcellular location is the endoplasmic reticulum membrane. The catalysed reaction is a sphingoid base + hexadecanoyl-CoA = an N-hexadecanoyl-sphingoid base + CoA + H(+). It carries out the reaction sphinganine + hexadecanoyl-CoA = N-hexadecanoylsphinganine + CoA + H(+). It catalyses the reaction hexadecasphinganine + hexadecanoyl-CoA = N-hexadecanoylhexadecasphinganine + CoA + H(+). The enzyme catalyses sphing-4-enine + hexadecanoyl-CoA = N-hexadecanoylsphing-4-enine + CoA + H(+). The catalysed reaction is 2-hydroxyhexadecanoyl-CoA + sphinganine = N-(2-hydroxyhexadecanoyl)-sphinganine + CoA + H(+). It carries out the reaction sphinganine + tetradecanoyl-CoA = N-(tetradecanoyl)-sphinganine + CoA + H(+). It catalyses the reaction sphinganine + octadecanoyl-CoA = N-(octadecanoyl)-sphinganine + CoA + H(+). The enzyme catalyses sphinganine + (9Z)-octadecenoyl-CoA = N-(9Z-octadecenoyl)-sphinganine + CoA + H(+). The catalysed reaction is a fatty acyl-CoA + sphing-4-enine = an N-acylsphing-4-enine + CoA + H(+). It carries out the reaction tetracosenoyl-CoA + sphing-4-enine = N-(tetracosenoyl)-sphing-4-enine + CoA + H(+). It functions in the pathway lipid metabolism; sphingolipid metabolism. Its activity is regulated as follows. Inhibited by fumonisin B1. Ceramide synthase that catalyzes the transfer of the acyl chain from acyl-CoA to a sphingoid base, with high selectivity toward palmitoyl-CoA (hexadecanoyl-CoA; C16:0-CoA). Can use other acyl donors, but with less efficiency. N-acylates sphinganine and sphingosine bases to form dihydroceramides and ceramides in de novo synthesis and salvage pathways, respectively. Plays a role in de novo ceramide synthesis and surfactant homeostasis in pulmonary epithelia. In Mus musculus (Mouse), this protein is Ceramide synthase 5.